We begin with the raw amino-acid sequence, 114 residues long: TYRO protein tyrosine kinase-binding protein (114 aa).

The first 21 residues, Met-1–Gly-21, serve as a signal peptide directing secretion. The Extracellular portion of the chain corresponds to Leu-22–Pro-42. Residues Gly-43 to Val-63 form a helical membrane-spanning segment. Asp-52 contributes to the Ca(2+) binding site. Over Tyr-64–Arg-114 the chain is Cytoplasmic. Residues Gln-74–Asn-107 form a disordered region. In terms of domain architecture, ITAM spans Arg-81–Gln-109. Residues Tyr-92 and Tyr-103 each carry the phosphotyrosine modification.

The protein belongs to the TYROBP family. In terms of assembly, homodimer; disulfide-linked. Homotrimer; disulfide-linked. Homotetramer; disulfide-linked. Homotrimers and homotetramers form when low levels of partner receptors are available and are competitive with assembly with interacting receptors. They may represent alternative oligomerization states or may be intermediates in the receptor assembly process. Binding of a metal cation aids in homooligomerization through coordination of the metal ion by the subunits of the oligomer. Interacts with TREM1. Interacts with TREM2. Interacts with TREM3. Interacts with CLECSF5. Interacts with CD300LB and CD300C2. Interacts with CD300E. Interacts (via ITAM domain) with SYK (via SH2 domains); activates SYK mediating neutrophil and macrophage integrin-mediated activation. Interacts (via transmembrane domain) with KLRK1 isoform 2 (via transmembrane domain); the interaction is required for KLRK1 NK cell surface expression and NK cell-mediated cytotoxicity. Interacts with KLRC2. Interacts with CD300H. Interacts with KLRD1. Interacts with KLRA4 and KLRA8. Tyrosine phosphorylated. Following ligand binding by associated receptors, tyrosine phosphorylated in the ITAM domain which leads to activation of additional tyrosine kinases and subsequent cell activation. In terms of tissue distribution, expressed on microglia (at protein level). Expressed on oligodendrocytes (at protein level). Expressed on macrophages and osteoclasts. Expressed on dendritic cells in liver, spleen, kidney and lung with highest levels in liver dendritic cells.

The protein localises to the cell membrane. Its function is as follows. Adapter protein which non-covalently associates with activating receptors found on the surface of a variety of immune cells to mediate signaling and cell activation following ligand binding by the receptors. TYROBP is tyrosine-phosphorylated in the ITAM domain following ligand binding by the associated receptors which leads to activation of additional tyrosine kinases and subsequent cell activation. Also has an inhibitory role in some cells. Non-covalently associates with activating receptors of the CD300 family to mediate cell activation. Also mediates cell activation through association with activating receptors of the CD200R family. Required for neutrophil activation mediated by integrin. Required for the activation of myeloid cells mediated by the CLEC5A/MDL1 receptor. Associates with natural killer (NK) cell receptors such as the KLRD1/KLRC2 heterodimer to mediate NK cell activation. Also associates non-covalently with the NK cell receptors KLRA4/LY49D and KLRA8/LY49H which leads to NK cell activation. Associates with TREM1 to mediate activation of neutrophils and monocytes. Associates with TREM2 on monocyte-derived dendritic cells to mediate up-regulation of chemokine receptor CCR7 and dendritic cell maturation and survival. Association with TREM2 mediates cytokine-induced formation of multinucleated giant cells which are formed by the fusion of macrophages. Stabilizes the TREM2 C-terminal fragment (TREM2-CTF) which is produced by TREM2 ectodomain shedding. In microglia, required with TREM2 for phagocytosis of apoptotic neurons. Required with ITGAM/CD11B in microglia to control production of microglial superoxide ions which promote the neuronal apoptosis that occurs during brain development. Promotes pro-inflammatory responses in microglia following nerve injury which accelerates degeneration of injured neurons. Positively regulates the expression of the IRAK3/IRAK-M kinase and IL10 production by liver dendritic cells and inhibits their T cell allostimulatory ability. Negatively regulates B cell proliferation. Required for CSF1-mediated osteoclast cytoskeletal organization. Positively regulates multinucleation during osteoclast development. In Mus musculus (Mouse), this protein is TYRO protein tyrosine kinase-binding protein.